A 203-amino-acid chain; its full sequence is Small ribosomal subunit protein uS4 (203 aa).

The S4 RNA-binding domain maps to 93 to 156 (RRLDNVVYRL…MKVPAILEAV (64 aa)).

It belongs to the universal ribosomal protein uS4 family. As to quaternary structure, part of the 30S ribosomal subunit. Contacts protein S5. The interaction surface between S4 and S5 is involved in control of translational fidelity.

Its function is as follows. One of the primary rRNA binding proteins, it binds directly to 16S rRNA where it nucleates assembly of the body of the 30S subunit. In terms of biological role, with S5 and S12 plays an important role in translational accuracy. In Streptococcus pyogenes serotype M1, this protein is Small ribosomal subunit protein uS4.